The following is a 181-amino-acid chain: MGLRFTKALSRLFGKKEMRILMVGLDAAGKTTILYKLKLGEIVTTIPTIGFNVETVEYKNISFTVWDVGGQDKIRPLWRHYFQNTQGLIFVVDSNDRERVVEARDELHRMLNEDELRDAVLLVFANKQDLPNAMNAAEITDKLGLHSLRQRHWYIQSTCATSGEGLYEGLDWLSNNLANKT.

Glycine 2 is lipidated: N-myristoyl glycine. GTP is bound by residues 24-31 (GLDAAGKT), 67-71 (DVGGQ), and 126-129 (NKQD).

Belongs to the small GTPase superfamily. Arf family.

Its subcellular location is the golgi apparatus. The catalysed reaction is GTP + H2O = GDP + phosphate + H(+). GTP-binding protein involved in protein trafficking; may modulate vesicle budding and uncoating within the Golgi apparatus. In Chlamydomonas reinhardtii (Chlamydomonas smithii), this protein is ADP-ribosylation factor 1 (ARF1).